Reading from the N-terminus, the 144-residue chain is L-fucose mutarotase (144 aa).

The active-site Proton donor is the H22. Substrate contacts are provided by residues D30, R109, and 131–133 (YGN).

The protein belongs to the RbsD / FucU family. FucU mutarotase subfamily. In terms of assembly, homodecamer.

The protein resides in the cytoplasm. The catalysed reaction is alpha-L-fucose = beta-L-fucose. Its pathway is carbohydrate metabolism; L-fucose metabolism. In terms of biological role, involved in the anomeric conversion of L-fucose. The protein is L-fucose mutarotase of Haemophilus influenzae (strain PittEE).